The following is a 558-amino-acid chain: Undecaprenyl phosphate-alpha-4-amino-4-deoxy-L-arabinose arabinosyl transferase 1 (558 aa).

Transmembrane regions (helical) follow at residues 4–24, 87–107, 115–135, 136–156, 178–198, 207–227, 257–277, 295–315, 316–336, 355–375, 383–403, and 411–431; these read GAGLWLGLLAVFFVLTYLVPL, FASVFSTGLSALLVFTVSWTV, LLAALIFLSLLLVFGVGTYSV, LDPMIALWLNAAMAAHVFALR, FMTKGFLALVVPAIAVLPVAL, LGYGALAALLAVLVNLPWALA, APFWFYLPVLALGSLPWLGLL, FLLLCWVVMPLLFFSVAKGKL, LTYILPCMAPLALLLAAYGRE, AFALCAIVALLLAGSGLLPWA, WPRIVIGTLVFAGWLCFAAVS, and WALAAFCPLLLSLLVGQIIPQ.

It belongs to the glycosyltransferase 83 family.

It is found in the cell inner membrane. The catalysed reaction is 4-amino-4-deoxy-alpha-L-arabinopyranosyl di-trans,octa-cis-undecaprenyl phosphate + lipid IVA = lipid IIA + di-trans,octa-cis-undecaprenyl phosphate.. The protein operates within lipopolysaccharide metabolism; 4-amino-4-deoxy-beta-L-arabinose-lipid A biosynthesis. Functionally, catalyzes the transfer of the L-Ara4N moiety of the glycolipid undecaprenyl phosphate-alpha-L-Ara4N to lipid A. The modified arabinose is attached to lipid A and is required for resistance to polymyxin and cationic antimicrobial peptides. This is Undecaprenyl phosphate-alpha-4-amino-4-deoxy-L-arabinose arabinosyl transferase 1 from Sodalis glossinidius (strain morsitans).